Consider the following 251-residue polypeptide: MDWMPPPKPTSPRSPPLLWDWADAAVPGSSSGEVSAAAAAAAAHPGRRRKEKRGRAEEGGGGGGEVRCQVEGCGVELVGVKDYHRKHRVCEAHSKFPRVVVAGQERRFCQQCSRFHALSEFDQKKRSCRRRLYDHNARRRKPQTDVFSYASARPPSSLLFDDNRQISFVWNKAPLSHVRPFAISPWESSSEVGTTDGHIYLDKSHISKSLPAFNTDIDELLPMKDFSAATIWMFFGVLFIRTAQESCMSFH.

The span at 1-15 shows a compositional bias: pro residues; the sequence is MDWMPPPKPTSPRSP. The segment at 1–64 is disordered; the sequence is MDWMPPPKPT…RAEEGGGGGG (64 aa). A compositionally biased stretch (low complexity) spans 24-43; it reads AAVPGSSSGEVSAAAAAAAA. The SBP-type zinc finger occupies 65 to 142; sequence EVRCQVEGCG…YDHNARRRKP (78 aa). Zn(2+)-binding residues include C68, C73, C90, H93, C109, C112, H116, and C128. Positions 125–141 match the Bipartite nuclear localization signal motif; sequence KRSCRRRLYDHNARRRK.

In terms of tissue distribution, expressed in stems, leaf sheaths, and young panicles.

The protein localises to the nucleus. In terms of biological role, trans-acting factor that binds specifically to the consensus nucleotide sequence 5'-TNCGTACAA-3'. May be involved in panicle development. The protein is Squamosa promoter-binding-like protein 4 (SPL4) of Oryza sativa subsp. japonica (Rice).